The sequence spans 246 residues: Bis(5'-nucleosyl)-tetraphosphatase PrpE [asymmetrical] (246 aa).

This sequence belongs to the PrpE family. Ni(2+) is required as a cofactor.

The catalysed reaction is P(1),P(4)-bis(5'-guanosyl) tetraphosphate + H2O = GMP + GTP + 2 H(+). Its function is as follows. Asymmetrically hydrolyzes Ap4p to yield AMP and ATP. In Bacillus cereus (strain B4264), this protein is Bis(5'-nucleosyl)-tetraphosphatase PrpE [asymmetrical].